Here is a 621-residue protein sequence, read N- to C-terminus: TOX high mobility group box family member 4 (621 aa).

2 disordered regions span residues 153–227 (LGLS…QKPV) and 305–333 (LDPAPPSQTPSPPPMATVDPASPAPASIE). Position 176 is a phosphothreonine (threonine 176). 3 positions are modified to phosphoserine: serine 178, serine 181, and serine 182. Residues 183-193 (LHEDGVEDFRR) show a composition bias toward basic and acidic residues. Residues 208 to 218 (KQKAPKKRKKK) show a composition bias toward basic residues. The Nuclear localization signal motif lies at 213–218 (KKRKKK). Positions 223–291 (PQKPVSAYAL…EYLKALAAYK (69 aa)) form a DNA-binding region, HMG box. Over residues 307-319 (PAPPSQTPSPPPM) the composition is skewed to pro residues. Phosphothreonine is present on threonine 313. Serine 315 is subject to Phosphoserine. Residues 320–333 (ATVDPASPAPASIE) are compositionally biased toward low complexity. The residue at position 481 (arginine 481) is an Asymmetric dimethylarginine. Residues 510 to 525 (PTVESSPERPMNNSPE) show a composition bias toward polar residues. The interval 510–529 (PTVESSPERPMNNSPEAHTV) is disordered. A phosphoserine mark is found at serine 533, serine 550, serine 552, serine 560, serine 562, and serine 567.

In terms of assembly, component of the PNUTS-PP1 phosphatase complex, composed of PPP1R10/PNUTS, TOX4, WDR82 and PPP1CA or PPP1CB or PPP1CC. Interacts with PPP1R10/PNUTS. Interacts with FOXO1 and CREB1 (increased by cAMP); FOXO1 and CREB1 are required for full induction of TOX4-dependent activity and the interactions are inhibited by insulin. Expressed in liver (at protein level).

Its subcellular location is the nucleus. The protein localises to the chromosome. With respect to regulation, in liver, recruited to target gene promoters following treatment with dexamethasone and cAMP. Binding is decreased in presence of insulin. Its function is as follows. Transcription factor that modulates cell fate reprogramming from the somatic state to the pluripotent and neuronal fate. In liver, controls the expression of hormone-regulated gluconeogenic genes such as G6PC1 and PCK1. This regulation is independent of the insulin receptor activation. Also acts as a regulatory component of protein phosphatase 1 (PP1) complexes. Component of the PNUTS-PP1 protein phosphatase complex, a PP1 complex that regulates RNA polymerase II transcription pause-release. PNUTS-PP1 also plays a role in the control of chromatin structure and cell cycle progression during the transition from mitosis into interphase. The polypeptide is TOX high mobility group box family member 4 (Homo sapiens (Human)).